Here is a 466-residue protein sequence, read N- to C-terminus: FERM domain-containing protein 8 (466 aa).

At methionine 1 the chain carries N-acetylmethionine. The segment at 1–21 is disordered; that stretch reads MEGAEGNAGQPGPAERSHRSS. Serine 24 is subject to Phosphoserine. Positions 30-377 constitute an FERM domain; it reads ADVLVYLADD…YCIELSQAAE (348 aa). The interval 379–409 is disordered; the sequence is TLSQESASGPHEAPSPSPPPTQRPKLRRQGS. Serine 384 is subject to Phosphoserine. Pro residues predominate over residues 391–400; that stretch reads APSPSPPPTQ. Serine 409 bears the Phosphoserine mark. Position 420 is a phosphothreonine (threonine 420). Phosphoserine is present on residues serine 440 and serine 447. Residues 442–460 show a composition bias toward polar residues; that stretch reads FSRQLSSSQGSYTVVQPTD. The tract at residues 442–466 is disordered; the sequence is FSRQLSSSQGSYTVVQPTDDSLEQS.

In terms of assembly, interacts with iRhom proteins, including iRhom2/RHBDF2 (via cytoplasmic N-termini); this interaction leads to mutual protein stabilization. Interacts with LRP6; this interaction affects LRP6-binding to AXIN1. In terms of tissue distribution, widely expressed (at protein level).

Its subcellular location is the cytoplasm. It localises to the cytosol. The protein localises to the cell membrane. Its function is as follows. Promotes the cell surface stability of iRhom1/RHBDF1 and iRhom2/RHBDF2 and prevents their degradation via the endolysosomal pathway. By acting on iRhoms, involved in ADAM17-mediated shedding of TNF, amphiregulin/AREG, HBEGF and TGFA from the cell surface. Negatively regulates Wnt signaling, possibly by antagonizing the recruitment of AXIN1 to LRP6. The protein is FERM domain-containing protein 8 (Frmd8) of Mus musculus (Mouse).